Here is a 509-residue protein sequence, read N- to C-terminus: Dihydrolipoyl dehydrogenase, mitochondrial (509 aa).

The transit peptide at 1 to 35 (MQSWSRVYCSLAKRGHFNRISHGLQGLSAVPLRTY) directs the protein to the mitochondrion. At Lys66 the chain carries N6-acetyllysine; alternate. Residue Lys66 is modified to N6-succinyllysine; alternate. FAD-binding positions include 71-80 (EKNETLGGTC) and Lys89. A disulfide bridge connects residues Cys80 and Cys85. Lys104, Lys122, Lys132, and Lys143 each carry N6-acetyllysine; alternate. N6-succinyllysine; alternate occurs at positions 104, 122, 132, and 143. Gly154 serves as a coordination point for FAD. N6-succinyllysine is present on residues Lys159 and Lys166. 183 to 185 (TGS) is a binding site for FAD. NAD(+)-binding positions include 220–227 (GAGVIGVE) and Glu243. Lys273 and Lys277 each carry N6-succinyllysine. Val278 is a binding site for NAD(+). Ser285 and Ser297 each carry phosphoserine. Gly314 serves as a coordination point for NAD(+). N6-acetyllysine is present on Lys346. FAD-binding positions include Asp355 and 361-364 (MLAH). Position 410 is an N6-acetyllysine; alternate (Lys410). Lys410 bears the N6-succinyllysine; alternate mark. N6-acetyllysine occurs at positions 417 and 420. Lys430 bears the N6-succinyllysine mark. The active-site Proton acceptor is His487. Position 502 is a phosphoserine (Ser502). Lys505 is subject to N6-acetyllysine; alternate. Lys505 bears the N6-succinyllysine; alternate mark.

It belongs to the class-I pyridine nucleotide-disulfide oxidoreductase family. Homodimer. Part of the multimeric pyruvate dehydrogenase complex that contains multiple copies of pyruvate dehydrogenase (subunits PDHA (PDHA1 or PDHA2) and PDHB, E1), dihydrolipoamide acetyltransferase (DLAT, E2) and lipoamide dehydrogenase (DLD, E3). These subunits are bound to an inner core composed of about 48 DLAT and 12 PDHX molecules (by non covalent bonds). The 2-oxoglutarate dehydrogenase complex is composed of OGDH (2-oxoglutarate dehydrogenase; E1), DLST (dihydrolipoamide succinyltransferase; E2), DLD (dihydrolipoamide dehydrogenase; E3) and the assembly factor KGD4. It contains multiple copies of the three enzymatic components (E1, E2 and E3). In the nucleus, the 2-oxoglutarate dehydrogenase complex associates with KAT2A. Interacts with PDHX. FAD is required as a cofactor. In terms of processing, tyrosine phosphorylated.

Its subcellular location is the mitochondrion matrix. It localises to the nucleus. It is found in the cell projection. The protein localises to the cilium. The protein resides in the flagellum. Its subcellular location is the cytoplasmic vesicle. It localises to the secretory vesicle. It is found in the acrosome. The enzyme catalyses N(6)-[(R)-dihydrolipoyl]-L-lysyl-[protein] + NAD(+) = N(6)-[(R)-lipoyl]-L-lysyl-[protein] + NADH + H(+). Functionally, lipoamide dehydrogenase is a component of the glycine cleavage system as well as an E3 component of three alpha-ketoacid dehydrogenase complexes (pyruvate-, alpha-ketoglutarate-, and branched-chain amino acid-dehydrogenase complex). The 2-oxoglutarate dehydrogenase complex is mainly active in the mitochondrion. A fraction of the 2-oxoglutarate dehydrogenase complex also localizes in the nucleus and is required for lysine succinylation of histones: associates with KAT2A on chromatin and provides succinyl-CoA to histone succinyltransferase KAT2A. In monomeric form may have additional moonlighting function as serine protease. Involved in the hyperactivation of spermatazoa during capacitation and in the spermatazoal acrosome reaction. The polypeptide is Dihydrolipoyl dehydrogenase, mitochondrial (DLD) (Pongo abelii (Sumatran orangutan)).